The primary structure comprises 187 residues: Dirigent protein 23 (187 aa).

The N-terminal stretch at 1 to 24 (MAKEEYVSRMLVMLIMIMPLVAQG) is a signal peptide. A glycan (N-linked (GlcNAc...) asparagine) is linked at N182.

Belongs to the plant dirigent protein family. Homodimer.

It localises to the secreted. The protein localises to the extracellular space. The protein resides in the apoplast. Functionally, dirigent proteins impart stereoselectivity on the phenoxy radical-coupling reaction, yielding optically active lignans from two molecules of coniferyl alcohol in the biosynthesis of lignans, flavonolignans, and alkaloids and thus plays a central role in plant secondary metabolism. The chain is Dirigent protein 23 (DIR23) from Arabidopsis thaliana (Mouse-ear cress).